The chain runs to 542 residues: MARYIFITGGVVSSLGKGLASAALGALLQARGYTVRLRKLDPYLNIDPGTMSPYQHGEVFVTDDGAETDLDLGHYERFTGRPAVRDDNITTGRIYRDIIAKERRGDYLGATVQVVPHVTNAIKEFILTGNEGLDFVLVEIGGTVGDIEGLPFFEAIRQLGNELPRGHAIYIHLTLLPYIPSAGELKTKPTQHSVKELRSIGIQPHILLCRTDRPIPFEERRKLGLFCNVRENAVIEARDVSSIYDVPHAYHAAGLDQEVLSAFGIEPAPKPDMSRWKAVMERIDNPEGEVTIAIVGKYTGLKDAYKSLIEALSHGGIANRVRVNLDWIESEIFEGTDPAPHLEHVHGILVPGGFGQRGAEGKMLAARFARQRKVPFFGICFGMQMAVIEAVRSLADIPLANSTEFGPTNEPVVGLMTEWMRDNELQMRAAEGDLGGTMRLGAYPALLAAGSKIAEIYGATEISERHRHRYEVNTAYREQLAEKGMIFSGLSPDGLLPEVVEFQDHPWFIGVQYHPELKSRPFAPHPLFSSFIAAAMEQSRLV.

Residues 1-265 (MARYIFITGG…DQEVLSAFGI (265 aa)) are amidoligase domain. S13 provides a ligand contact to CTP. Position 13 (S13) interacts with UTP. Residue 14-19 (SLGKGL) coordinates ATP. An L-glutamine-binding site is contributed by Y54. D71 contributes to the ATP binding site. Positions 71 and 139 each coordinate Mg(2+). Residues 146–148 (DIE), 186–191 (KTKPTQ), and K222 contribute to the CTP site. Residues 186-191 (KTKPTQ) and K222 contribute to the UTP site. Position 238–240 (238–240 (RDV)) interacts with ATP. The Glutamine amidotransferase type-1 domain occupies 291–541 (TIAIVGKYTG…IAAAMEQSRL (251 aa)). G353 contributes to the L-glutamine binding site. C380 functions as the Nucleophile; for glutamine hydrolysis in the catalytic mechanism. Residues 381-384 (FGMQ), E404, and R469 each bind L-glutamine. Residues H514 and E516 contribute to the active site.

It belongs to the CTP synthase family. In terms of assembly, homotetramer.

The catalysed reaction is UTP + L-glutamine + ATP + H2O = CTP + L-glutamate + ADP + phosphate + 2 H(+). It catalyses the reaction L-glutamine + H2O = L-glutamate + NH4(+). It carries out the reaction UTP + NH4(+) + ATP = CTP + ADP + phosphate + 2 H(+). Its pathway is pyrimidine metabolism; CTP biosynthesis via de novo pathway; CTP from UDP: step 2/2. Allosterically activated by GTP, when glutamine is the substrate; GTP has no effect on the reaction when ammonia is the substrate. The allosteric effector GTP functions by stabilizing the protein conformation that binds the tetrahedral intermediate(s) formed during glutamine hydrolysis. Inhibited by the product CTP, via allosteric rather than competitive inhibition. Functionally, catalyzes the ATP-dependent amination of UTP to CTP with either L-glutamine or ammonia as the source of nitrogen. Regulates intracellular CTP levels through interactions with the four ribonucleotide triphosphates. The sequence is that of CTP synthase from Beijerinckia indica subsp. indica (strain ATCC 9039 / DSM 1715 / NCIMB 8712).